The chain runs to 119 residues: Lamprin 1.8-10 (119 aa).

The first 19 residues, 1–19, serve as a signal peptide directing secretion; the sequence is MAATMQALLVIALLHLATA. A run of 7 repeats spans residues 41–45, 46–50, 51–55, 56–60, 61–65, 66–70, and 86–90. The interval 41–90 is 7 X 5 AA approximate repeats; sequence GGLGYGGLGYGGLGYGGLGVAGLGYGGLGYPGAALGGAYTHHAALGGLGY.

The polymeric lamprin chains self-aggregate to form fibers and have secondary structures particularly rich in beta-sheets and in beta-turns.

It is found in the secreted. The protein resides in the extracellular space. It localises to the extracellular matrix. Its function is as follows. Self-aggregating protein that is part of the soluble form of lamprin. The chain is Lamprin 1.8-10 from Petromyzon marinus (Sea lamprey).